A 441-amino-acid chain; its full sequence is Enolase (441 aa).

Residue Gln-164 coordinates (2R)-2-phosphoglycerate. Glu-206 serves as the catalytic Proton donor. Positions 243, 289, and 316 each coordinate Mg(2+). Residues Lys-341, Arg-370, Ser-371, and Lys-392 each contribute to the (2R)-2-phosphoglycerate site. The active-site Proton acceptor is the Lys-341.

It belongs to the enolase family. Mg(2+) serves as cofactor.

Its subcellular location is the cytoplasm. It is found in the secreted. The protein localises to the cell surface. The catalysed reaction is (2R)-2-phosphoglycerate = phosphoenolpyruvate + H2O. Its pathway is carbohydrate degradation; glycolysis; pyruvate from D-glyceraldehyde 3-phosphate: step 4/5. Functionally, catalyzes the reversible conversion of 2-phosphoglycerate (2-PG) into phosphoenolpyruvate (PEP). It is essential for the degradation of carbohydrates via glycolysis. In Leuconostoc citreum (strain KM20), this protein is Enolase.